A 252-amino-acid chain; its full sequence is Proteasome subunit alpha type-7-1B (252 aa).

This sequence belongs to the peptidase T1A family. In terms of assembly, the 26S proteasome consists of a 20S proteasome core and two 19S regulatory subunits. The 20S proteasome core is composed of 28 subunits that are arranged in four stacked rings, resulting in a barrel-shaped structure. The two end rings are each formed by seven alpha subunits, and the two central rings are each formed by seven beta subunits. The catalytic chamber with the active sites is on the inside of the barrel. In terms of tissue distribution, testis specific.

The protein resides in the cytoplasm. Its subcellular location is the nucleus. Functionally, the proteasome is a multicatalytic proteinase complex which is characterized by its ability to cleave peptides with Arg, Phe, Tyr, Leu, and Glu adjacent to the leaving group at neutral or slightly basic pH. The proteasome has an ATP-dependent proteolytic activity. In Drosophila melanogaster (Fruit fly), this protein is Proteasome subunit alpha type-7-1B (Prosalpha4T2).